The following is a 501-amino-acid chain: MSLPSIGSVGSDRMAAYMHGQQVYTGQFGDPNLTPPQAETQMSAQASAQAVGQEPEPDYKLVIRQEPQRARVAQGKEKGTDRKPIDPPPIVQLIRTARSDPAQIYLQSPYYFMACTLIKGSDDDPDPNPNSMLGTLVSSLHKLRDLNNEDGGFFIFGDLSIKIEGVFRLQFTLFQMKDSTCVFLDSATSQPFTVYPQKNFEGMAESTFLTRSFSDQGVRLRVRKDSRAMTTRKRNHQHAEVAKKHSEWDRKQTSAVSRHSSINENDSTPTDTRGLASFAGAGSSGYYDQHRSHYGETYGHDTYYGGARSVKRARHEVSPGQYALPDLPQQAYATRQPSFSDSVASMTMPPVTTAAPSLAGINPMSSHHGYTGSAHPGFAPHRINTQVGGSHLAPQPHSAIGSVNQGYQSPSTHHQPHPHTAHPAGGQAYPSPSPRQSPGTAPNYHYGSHHSQQTPVSLGLETYTSAGVVGMPGPGQLVGTSAPSPHLGQGYRHGMINEPGA.

3 disordered regions span residues 26–55, 67–88, and 228–274; these read GQFG…GQEP, PQRA…IDPP, and AMTT…DTRG. Residues 35-50 show a composition bias toward polar residues; it reads PPQAETQMSAQASAQA. In terms of domain architecture, Velvet spans 52–223; that stretch reads GQEPEPDYKL…SDQGVRLRVR (172 aa). Composition is skewed to basic and acidic residues over residues 67 to 85 and 237 to 252; these read PQRA…RKPI and QHAE…DRKQ. The span at 253–271 shows a compositional bias: polar residues; that stretch reads TSAVSRHSSINENDSTPTD. Positions 364 to 371 match the Nuclear localization signal motif; sequence MSSHHGYT. 2 disordered regions span residues 378 to 455 and 474 to 501; these read FAPH…QQTP and PGQL…EPGA.

This sequence belongs to the velvet family. VosA subfamily. As to quaternary structure, forms a heterodimeric complex with VELB; the formation of the VELB-VOSA complex is light-dependent.

The protein localises to the nucleus. Functionally, component of the VELB-VOSA heterodimeric complex that plays a dual role in activating genes associated with spore maturation and repressing certain development-associated genes. The complex binds DNA through the DNA-binding domain of VOSA that recognizes an 11-nucleotide consensus sequence 5'-CTGGCCGCGGC-3' consisting of two motifs in the promoters of key developmental regulatory genes. Appears dispensable for the development and pathogenicity. This Pyricularia oryzae (strain 70-15 / ATCC MYA-4617 / FGSC 8958) (Rice blast fungus) protein is Spore development regulator VOSA.